A 304-amino-acid polypeptide reads, in one-letter code: Glycine--tRNA ligase alpha subunit (304 aa).

Belongs to the class-II aminoacyl-tRNA synthetase family. Tetramer of two alpha and two beta subunits.

The protein resides in the cytoplasm. The enzyme catalyses tRNA(Gly) + glycine + ATP = glycyl-tRNA(Gly) + AMP + diphosphate. The sequence is that of Glycine--tRNA ligase alpha subunit from Photorhabdus laumondii subsp. laumondii (strain DSM 15139 / CIP 105565 / TT01) (Photorhabdus luminescens subsp. laumondii).